A 312-amino-acid polypeptide reads, in one-letter code: tRNA dimethylallyltransferase (312 aa).

An ATP-binding site is contributed by 10–17; that stretch reads GPTGVGKT. 12–17 provides a ligand contact to substrate; the sequence is TGVGKT.

Belongs to the IPP transferase family. As to quaternary structure, monomer. The cofactor is Mg(2+).

The enzyme catalyses adenosine(37) in tRNA + dimethylallyl diphosphate = N(6)-dimethylallyladenosine(37) in tRNA + diphosphate. Its function is as follows. Catalyzes the transfer of a dimethylallyl group onto the adenine at position 37 in tRNAs that read codons beginning with uridine, leading to the formation of N6-(dimethylallyl)adenosine (i(6)A). The chain is tRNA dimethylallyltransferase from Coprothermobacter proteolyticus (strain ATCC 35245 / DSM 5265 / OCM 4 / BT).